The chain runs to 132 residues: Small ribosomal subunit protein uS8c (132 aa).

This sequence belongs to the universal ribosomal protein uS8 family. In terms of assembly, part of the 30S ribosomal subunit.

It localises to the plastid. It is found in the chloroplast. Its function is as follows. One of the primary rRNA binding proteins, it binds directly to 16S rRNA central domain where it helps coordinate assembly of the platform of the 30S subunit. This is Small ribosomal subunit protein uS8c (rps8) from Chaetosphaeridium globosum (Charophycean green alga).